Here is a 515-residue protein sequence, read N- to C-terminus: UDP-glucosyltransferase 2 (515 aa).

The signal sequence occupies residues 1-20 (MEFRLLILALFSVLMSTSNG). Topologically, residues 21 to 471 (AEILALFPIH…TAGAFLHWYQ (451 aa)) are lumenal. Residues N51, N236, and N303 are each glycosylated (N-linked (GlcNAc...) asparagine). Residues 472–492 (YLLLDVITFLLVTFCAFCFIV) traverse the membrane as a helical segment. Over 493-515 (KYICKALIHHYWSSSKSEKLKKN) the chain is Cytoplasmic.

The protein belongs to the UDP-glycosyltransferase family. Post-translationally, glycosylated.

The protein resides in the endoplasmic reticulum membrane. It carries out the reaction kermesate + UDP-alpha-D-glucose = carminate + UDP + 2 H(+). It catalyses the reaction flavokermesate + UDP-alpha-D-glucose = flavokermesate 7-C-beta-D-glucoside + UDP + 2 H(+). Membrane-bound UDP-glucosyltransferase (UGT) which catalyzes the C-glucosylation of kermesate and flavokermesate to produce carminate and flavokermesate 7-C-beta-D-glucoside (dcll) respectively. Carminate is used as a deterrent against insect predators. The chain is UDP-glucosyltransferase 2 from Dactylopius coccus (Cochineal).